A 135-amino-acid chain; its full sequence is DNA-directed RNA polymerase subunit omega (135 aa).

The segment at 107 to 135 (ASQESQDYEVDGEIDDEINDQDGDEEVSV) is disordered. Acidic residues predominate over residues 112 to 135 (QDYEVDGEIDDEINDQDGDEEVSV).

The protein belongs to the RNA polymerase subunit omega family. The RNAP catalytic core consists of 2 alpha, 1 beta, 1 beta' and 1 omega subunit. When a sigma factor is associated with the core the holoenzyme is formed, which can initiate transcription.

The catalysed reaction is RNA(n) + a ribonucleoside 5'-triphosphate = RNA(n+1) + diphosphate. Functionally, promotes RNA polymerase assembly. Latches the N- and C-terminal regions of the beta' subunit thereby facilitating its interaction with the beta and alpha subunits. In Wolbachia pipientis wMel, this protein is DNA-directed RNA polymerase subunit omega.